A 99-amino-acid chain; its full sequence is Antitoxin VapB47 (99 aa).

The protein belongs to the phD/YefM antitoxin family.

Functionally, antitoxin component of a type II toxin-antitoxin (TA) system. This Mycobacterium tuberculosis (strain CDC 1551 / Oshkosh) protein is Antitoxin VapB47 (vapB47).